Reading from the N-terminus, the 256-residue chain is 5'-nucleotidase SurE (256 aa).

The a divalent metal cation site is built by Asp13, Asp14, Ser44, and Asn101.

This sequence belongs to the SurE nucleotidase family. The cofactor is a divalent metal cation.

The protein resides in the cytoplasm. The catalysed reaction is a ribonucleoside 5'-phosphate + H2O = a ribonucleoside + phosphate. Its function is as follows. Nucleotidase that shows phosphatase activity on nucleoside 5'-monophosphates. The sequence is that of 5'-nucleotidase SurE from Porphyromonas gingivalis (strain ATCC 33277 / DSM 20709 / CIP 103683 / JCM 12257 / NCTC 11834 / 2561).